A 378-amino-acid chain; its full sequence is Anhydro-N-acetylmuramic acid kinase (378 aa).

Residue 23–30 (GTSMDGAD) coordinates ATP.

It belongs to the anhydro-N-acetylmuramic acid kinase family.

The catalysed reaction is 1,6-anhydro-N-acetyl-beta-muramate + ATP + H2O = N-acetyl-D-muramate 6-phosphate + ADP + H(+). Its pathway is amino-sugar metabolism; 1,6-anhydro-N-acetylmuramate degradation. The protein operates within cell wall biogenesis; peptidoglycan recycling. Functionally, catalyzes the specific phosphorylation of 1,6-anhydro-N-acetylmuramic acid (anhMurNAc) with the simultaneous cleavage of the 1,6-anhydro ring, generating MurNAc-6-P. Is required for the utilization of anhMurNAc either imported from the medium or derived from its own cell wall murein, and thus plays a role in cell wall recycling. This chain is Anhydro-N-acetylmuramic acid kinase, found in Bordetella bronchiseptica (strain ATCC BAA-588 / NCTC 13252 / RB50) (Alcaligenes bronchisepticus).